Reading from the N-terminus, the 229-residue chain is NAD(P)H-hydrate epimerase (229 aa).

Residues 10–217 (AINVDQELFN…ALQRKYDLNL (208 aa)) form the YjeF N-terminal domain. Residue 60–64 (NNGGD) participates in (6S)-NADPHX binding. K(+) is bound by residues Asn-61 and Asp-125. Residues 129 to 135 (GFSFKPP) and Asp-158 contribute to the (6S)-NADPHX site. Ser-161 is a K(+) binding site.

It belongs to the NnrE/AIBP family. Requires K(+) as cofactor.

It carries out the reaction (6R)-NADHX = (6S)-NADHX. It catalyses the reaction (6R)-NADPHX = (6S)-NADPHX. Catalyzes the epimerization of the S- and R-forms of NAD(P)HX, a damaged form of NAD(P)H that is a result of enzymatic or heat-dependent hydration. This is a prerequisite for the S-specific NAD(P)H-hydrate dehydratase to allow the repair of both epimers of NAD(P)HX. The sequence is that of NAD(P)H-hydrate epimerase from Drosophila ananassae (Fruit fly).